The chain runs to 3739 residues: Cardiomyopathy-associated protein 5 (3739 aa).

Disordered regions lie at residues 1-205 (MESG…PPIT), 268-814 (SLEP…SAFV), 835-884 (VSVS…AIQS), 967-1270 (LSED…SDVP), 1288-1313 (TQAS…RDAK), 1325-1637 (SSAL…NLVS), 1650-1969 (EMNR…EKGK), 1986-2016 (SSIP…AIEP), 2065-2246 (FLSN…WETR), 2273-2318 (AVGE…LALD), 2377-2498 (VYPE…SAVE), 2513-2532 (KKQE…TSKD), and 2579-2616 (SADG…SEDQ). Over residues 18–47 (ADEEVAQELETEEESEGEGEETAAESEEEP) the composition is skewed to acidic residues. The span at 48-62 (DARLSDEDEEGKTKQ) shows a compositional bias: basic and acidic residues. Polar residues predominate over residues 84-106 (TWETNSSRSSTPWASGESQTSGI). Residues 130–153 (RTRKRTQKSKRGSPSLRRKGSKKR) show a composition bias toward basic residues. Ser-155 carries the post-translational modification Phosphoserine. Composition is skewed to polar residues over residues 156–175 (LESQ…SESP) and 325–336 (ADSNLNVPSSTE). Residues 380 to 406 (ATMVLERAKEELEQNAQGKESSEDDAS) adopt a coiled-coil conformation. Basic and acidic residues-rich tracts occupy residues 479-637 (IVHR…REEE), 644-663 (SIVH…REEE), and 670-730 (SIVH…ERGV). Repeat copies occupy residues 482-493 (REEEHAPEPIVH) and 494-505 (REEEHAPEPIVH). The 20 X 12 AA approximate tandem repeats of R-[DE]-[EK]-[EG]-H-[AV]-P-E-[PS]-[IM]-V-[HLR] stretch occupies residues 482 to 720 (REEEHAPEPI…EEHAPEPMVH (239 aa)). The stretch at 506 to 519 (REEEHAPEPESIVH) is one 3; approximate repeat. Repeat 4 spans residues 520-531 (REEEHAPESIVH). The stretch at 532 to 545 (REEEHAPEPVPIVH) is one 5; approximate repeat. One copy of the 6; approximate repeat lies at 546–559 (REEEHAPEPESIVH). 4 consecutive repeat copies span residues 560 to 571 (REEEHAPEPIVH), 572 to 583 (RDKGHALEPIVH), 584 to 595 (REEEHAPEPIVH), and 596 to 607 (RDEGHAPEPIVH). The stretch at 608–621 (REEEHVPEPESIVR) is one 11; approximate repeat. A 12; approximate repeat occupies 622–633 (KGEEHAPEPIVH). The 14; approximate repeat unit spans residues 634 to 647 (REEEQVPEPESIVH). Repeat unit 15 spans residues 648 to 659 (REEEHAPEPIVH). A 16; approximate repeat occupies 660–673 (REEEQVPEPESIVH). 4 repeat units span residues 674 to 685 (REEEHAPEPMVL), 686 to 696 (REEHAPEPIVR), 697 to 708 (REEEHAPEPIVH), and 709 to 720 (REEEHAPEPMVH). Over residues 740–756 (TEPEDSSLEEEIIELDY) the composition is skewed to acidic residues. The residue at position 850 (Ser-850) is a Phosphoserine. Polar residues-rich tracts occupy residues 861 to 884 (PAMT…AIQS) and 1151 to 1161 (CLTSPSEQTVL). Composition is skewed to basic and acidic residues over residues 1188–1197 (AETEQNKVEP) and 1230–1242 (EHSE…EESS). A compositionally biased stretch (polar residues) spans 1337–1351 (TSVLPTSQPSVSPES). Basic and acidic residues-rich tracts occupy residues 1441–1460 (LEQR…HSPP) and 1476–1486 (TEVKQESKITR). Residues 1522 to 1540 (ASSSATTVPVTKLDSNSTK) show a composition bias toward polar residues. Basic and acidic residues-rich tracts occupy residues 1620-1631 (NDKHEEITRSPD), 1697-1706 (IDSRDRDRSL), 1726-1742 (GPAE…ENRK), 1760-1770 (IEQKEPKRTLH), 1786-1803 (DKPE…ENLE), and 1836-1850 (EKPD…DRKP). The span at 1854 to 1863 (QLESSESTDL) shows a compositional bias: polar residues. Basic and acidic residues-rich tracts occupy residues 1874-1885 (DTDHTSETRNQE), 1896-1916 (LSQE…EGRK), 1992-2001 (KVSDNEDLET), and 2153-2165 (ARKE…HKET). Positions 2181 to 2190 (KSAQSAFTRM) are enriched in polar residues. A Phosphoserine modification is found at Ser-2192. Composition is skewed to basic and acidic residues over residues 2212–2244 (GEDR…DGWE), 2279–2299 (RMPE…RLEQ), 2306–2318 (KLME…LALD), 2377–2419 (VYPE…ETDG), and 2429–2448 (ELEK…RRFV). Residue Ser-2411 is modified to Phosphoserine. Phosphoserine is present on Ser-2495. Residues 2513-2523 (KKQETWSDRPT) are compositionally biased toward basic and acidic residues. The stretch at 2640-2664 (SVDQEESEQMQDKLQYLEEKASFKS) forms a coiled coil. Disordered stretches follow at residues 2667–2725 (VHDE…QPTV), 2742–2773 (LSPG…SSAE), 2791–2835 (GPEK…GMPL), 2881–2959 (EKNE…EREI), 3027–3047 (LESE…DVNL), and 3111–3174 (PEEP…QKEP). The segment covering 2682-2709 (SKLEVPDRKITSLKENKTKETHKTKEEI) has biased composition (basic and acidic residues). The tract at residues 2731-3041 (YFEKYTLIDY…SSQGNEAGNA (311 aa)) is required for RYR2 clustering. Positions 2762–2773 (KTLTSFPESSAE) are enriched in polar residues. 2 stretches are compositionally biased toward basic and acidic residues: residues 2791–2804 (GPEK…HAEM) and 2812–2828 (KPDD…DVDS). Ser-2905 carries the phosphoserine modification. Basic and acidic residues predominate over residues 2918–2929 (YILKDDILHDES). The segment covering 3030–3047 (EPSSQGNEAGNASPDVNL) has biased composition (polar residues). Residues 3153–3162 (VWDRTEDQSA) are compositionally biased toward basic and acidic residues. The segment at 3187–3214 (KSLVSEMDKALDIHKDHEVSALDTAISA) is amphipathic helix H1. The segment at 3215–3342 (VKVQLGEFLE…ERLLSAMEST (128 aa)) is B-box coiled-coil; BBC. Positions 3244–3323 (FNTIEEKCSK…REAEELDETV (80 aa)) form a coiled coil. Residues 3301–3318 (SMDTAKDTLETIVREAEE) form an amphipathic helix H2 region. Fibronectin type-III domains lie at 3374 to 3475 (VPQP…TAPS) and 3476 to 3568 (TPVI…TRGT). Positions 3421–3437 (EINELVEEYRLTVKESC) are amphipathic helix H3. The region spanning 3550–3735 (NASGTSEQSE…LHLGLEPPDS (186 aa)) is the B30.2/SPRY domain.

As to quaternary structure, interacts with PRKAR2A. Interacts with ACTN2, DES and DTNBP1/dysbindin. Interacts with DMD/dystrophin. Interacts with the calcineurin catalytic subunit PPP3CA. Interacts with TTN. Interacts with CAPN3; this interaction, which results in CMYA5 proteolysis, may protect CAPN3 from autolysis. Interacts with FSD2. In cardiac muscles, identified in a complex composed of FSD2, CMYA5 and RYR2. In terms of processing, phosphorylated by PKA. Expressed in skin as well as in cardiac muscle. Expressed in skeletal muscle (at protein level).

The protein localises to the nucleus. The protein resides in the cytoplasm. Its subcellular location is the perinuclear region. It localises to the myofibril. It is found in the sarcomere. The protein localises to the m line. The protein resides in the sarcoplasmic reticulum. Its function is as follows. May serve as an anchoring protein that mediates the subcellular compartmentation of protein kinase A (PKA) via binding to PRKAR2A. May attenuate calcineurin ability to induce slow-fiber gene program in muscle and may negatively modulate skeletal muscle regeneration. Plays a role in the assembly of ryanodine receptor (RYR2) clusters in striated muscle. In Mus musculus (Mouse), this protein is Cardiomyopathy-associated protein 5 (Cmya5).